Consider the following 69-residue polypeptide: DNA gyrase inhibitor YacG (69 aa).

Zn(2+) contacts are provided by C14, C17, C33, and C37. The interval 46–69 (ADEEKSIPGAPDMSDSDGWSEDQY) is disordered. The segment covering 59–69 (SDSDGWSEDQY) has biased composition (acidic residues).

Belongs to the DNA gyrase inhibitor YacG family. As to quaternary structure, interacts with GyrB. It depends on Zn(2+) as a cofactor.

Inhibits all the catalytic activities of DNA gyrase by preventing its interaction with DNA. Acts by binding directly to the C-terminal domain of GyrB, which probably disrupts DNA binding by the gyrase. The polypeptide is DNA gyrase inhibitor YacG (Aliivibrio fischeri (strain ATCC 700601 / ES114) (Vibrio fischeri)).